Reading from the N-terminus, the 291-residue chain is ATP synthase gamma chain (291 aa).

Belongs to the ATPase gamma chain family. F-type ATPases have 2 components, CF(1) - the catalytic core - and CF(0) - the membrane proton channel. CF(1) has five subunits: alpha(3), beta(3), gamma(1), delta(1), epsilon(1). CF(0) has three main subunits: a, b and c.

It localises to the cell inner membrane. In terms of biological role, produces ATP from ADP in the presence of a proton gradient across the membrane. The gamma chain is believed to be important in regulating ATPase activity and the flow of protons through the CF(0) complex. In Nitratidesulfovibrio vulgaris (strain ATCC 29579 / DSM 644 / CCUG 34227 / NCIMB 8303 / VKM B-1760 / Hildenborough) (Desulfovibrio vulgaris), this protein is ATP synthase gamma chain.